The following is a 604-amino-acid chain: Phosphoprotein (604 aa).

Disordered regions lie at residues 1 to 22 (MESD…RDKS) and 39 to 360 (DPQE…EESN). The segment at 22–42 (STNISSALNIIEFILSTDPQE) is N0 binding. 2 stretches are compositionally biased toward polar residues: residues 47–61 (NDTI…SATI) and 74–90 (KVSG…SSHE). Residues 91-101 (CTTEAKDRNID) show a composition bias toward basic and acidic residues. Residues 129–144 (GSITDSKNGTQNTENI) show a composition bias toward polar residues. Basic and acidic residues predominate over residues 147-163 (NEIRKMDKDSIERKMRQ). The span at 197–207 (TPDTRSMSVVT) shows a compositional bias: polar residues. Over residues 245–267 (KGKDWFKKSRDTDNQTSTSDHKP) the composition is skewed to basic and acidic residues. Low complexity-rich tracts occupy residues 277–300 (KTTT…ETQS) and 317–328 (TSTTPPTTTPRS). Residues 330-360 (RTKESIRTNSESKPKTQKTIGKERKDTEESN) show a composition bias toward basic and acidic residues. Positions 400 to 470 (VDTASKIDFL…SLISNLKIMT (71 aa)) are multimerization. Residues 424–451 (LIQIQNEMLNLKADLKRMDESHRRLIEN) adopt a coiled-coil conformation. Residues 450-483 (ENQREQLSLITSLISNLKIMTERGGKKDQNESNE) are l protein binding. The interaction with the nucleocapsid (N-RNA) stretch occupies residues 585–604 (KSDEEVSELMDMFNEDVNNC).

The protein belongs to the respirovirus P protein family. Homotetramer. Interacts (via multimerization domain) with polymerase L; this interaction forms the polymerase L-P complex. Interacts (via N-terminus) with N0; this interaction allows P to chaperon N0 to avoid N polymerization before encapsidation. Interacts (via C-terminus) with N-RNA template; this interaction positions the polymerase on the template. Interacts with host PI4KB; this interaction allows P to recruit PI4KB to the viral factories to generate PI4P to facilitate viral replication.

Essential cofactor of the RNA polymerase L that plays a central role in the transcription and replication by forming the polymerase complex with RNA polymerase L and recruiting L to the genomic N-RNA template for RNA synthesis. Also plays a central role in the encapsidation of nascent RNA chains by forming the encapsidation complex with the nucleocapsid protein N (N-P complex). Acts as a chaperone for newly synthesized free N protein, so-called N0, allowing encapsidation of nascent RNA chains during replication. The nucleoprotein protein N prevents excessive phosphorylation of P, which leads to down-regulation of viral transcription/ replication. Participates, together with N, in the formation of viral factories (viroplasms), which are large inclusions in the host cytoplasm where replication takes place. Recruits host PI4KB and remodel the host endoplasmic reticulum membrane to form viral replication factories. In Human parainfluenza 3 virus (strain Wash/47885/57) (HPIV-3), this protein is Phosphoprotein (P/V/D).